Consider the following 154-residue polypeptide: MAKEEKRVVAQNRKARHDYFIEQTIEAGIVLSGTEVKSIRAGKVSLKDSYANVKNGEVFIYGMHISPYEQGNIFNKDPLRDRKLLLHRAEINKLIGYIQQKGMTLVPLEVYFKNGKVKIELGIAKGKKLYDKREDIAKRDALREIDRRLKENFR.

This sequence belongs to the SmpB family.

The protein resides in the cytoplasm. Functionally, required for rescue of stalled ribosomes mediated by trans-translation. Binds to transfer-messenger RNA (tmRNA), required for stable association of tmRNA with ribosomes. tmRNA and SmpB together mimic tRNA shape, replacing the anticodon stem-loop with SmpB. tmRNA is encoded by the ssrA gene; the 2 termini fold to resemble tRNA(Ala) and it encodes a 'tag peptide', a short internal open reading frame. During trans-translation Ala-aminoacylated tmRNA acts like a tRNA, entering the A-site of stalled ribosomes, displacing the stalled mRNA. The ribosome then switches to translate the ORF on the tmRNA; the nascent peptide is terminated with the 'tag peptide' encoded by the tmRNA and targeted for degradation. The ribosome is freed to recommence translation, which seems to be the essential function of trans-translation. The chain is SsrA-binding protein from Acetivibrio thermocellus (strain ATCC 27405 / DSM 1237 / JCM 9322 / NBRC 103400 / NCIMB 10682 / NRRL B-4536 / VPI 7372) (Clostridium thermocellum).